The following is a 90-amino-acid chain: Phosphoribosyl-ATP pyrophosphatase (90 aa).

It belongs to the PRA-PH family.

It localises to the cytoplasm. It carries out the reaction 1-(5-phospho-beta-D-ribosyl)-ATP + H2O = 1-(5-phospho-beta-D-ribosyl)-5'-AMP + diphosphate + H(+). The protein operates within amino-acid biosynthesis; L-histidine biosynthesis; L-histidine from 5-phospho-alpha-D-ribose 1-diphosphate: step 2/9. The protein is Phosphoribosyl-ATP pyrophosphatase (hisE) of Streptomyces coelicolor (strain ATCC BAA-471 / A3(2) / M145).